The sequence spans 1110 residues: Error-prone DNA polymerase (1110 aa).

The interval 1072–1110 (LGELHEPLNDDRREHPDNPAQRIRHPRDVRILPPSRDFH) is disordered. Basic and acidic residues-rich tracts occupy residues 1073 to 1088 (GELH…EHPD) and 1097 to 1110 (PRDV…RDFH).

The protein belongs to the DNA polymerase type-C family. DnaE2 subfamily.

It is found in the cytoplasm. It carries out the reaction DNA(n) + a 2'-deoxyribonucleoside 5'-triphosphate = DNA(n+1) + diphosphate. In terms of biological role, DNA polymerase involved in damage-induced mutagenesis and translesion synthesis (TLS). It is not the major replicative DNA polymerase. The protein is Error-prone DNA polymerase of Rhodopseudomonas palustris (strain BisB5).